A 275-amino-acid polypeptide reads, in one-letter code: Phosphate import ATP-binding protein PstB (275 aa).

One can recognise an ABC transporter domain in the interval 29–270 (VSVRDLNFYY…PTDRRTQDYI (242 aa)). Residue 61 to 68 (GPSGCGKS) coordinates ATP.

Belongs to the ABC transporter superfamily. Phosphate importer (TC 3.A.1.7) family. In terms of assembly, the complex is composed of two ATP-binding proteins (PstB), two transmembrane proteins (PstC and PstA) and a solute-binding protein (PstS).

The protein localises to the cell inner membrane. It catalyses the reaction phosphate(out) + ATP + H2O = ADP + 2 phosphate(in) + H(+). Functionally, part of the ABC transporter complex PstSACB involved in phosphate import. Responsible for energy coupling to the transport system. The sequence is that of Phosphate import ATP-binding protein PstB from Rhodopseudomonas palustris (strain BisB18).